Consider the following 207-residue polypeptide: NADH-quinone oxidoreductase chain 5 (207 aa).

This sequence belongs to the complex I 30 kDa subunit family. NDH-1 is composed of at least 14 different subunits, Nqo1 to Nqo14. The complex has a L-shaped structure, with the hydrophobic arm (subunits Nqo7, Nqo8, Nqo10 to Nqo14) embedded in the inner membrane and the hydrophilic peripheral arm (subunits Nqo1 to Nqo6, Nqo9) protruding into the bacterial cytoplasm. The hydrophilic domain contains all the redox centers.

The protein resides in the cell inner membrane. It catalyses the reaction a quinone + NADH + 5 H(+)(in) = a quinol + NAD(+) + 4 H(+)(out). Functionally, NDH-1 shuttles electrons from NADH, via FMN and iron-sulfur (Fe-S) centers, to quinones in the respiratory chain. The immediate electron acceptor for the enzyme in this species is believed to be ubiquinone. Couples the redox reaction to proton translocation (for every two electrons transferred, four hydrogen ions are translocated across the cytoplasmic membrane), and thus conserves the redox energy in a proton gradient. In Paracoccus denitrificans, this protein is NADH-quinone oxidoreductase chain 5 (nqo5).